The chain runs to 462 residues: U2 small nuclear ribonucleoprotein auxiliary factor 35 kDa subunit-related protein 2 (462 aa).

The segment covering 1–13 has biased composition (low complexity); it reads METAGATADATAG. Disordered stretches follow at residues 1-22, 44-66, and 115-138; these read METAGATADATAGPQKLSRKKY, AELAQKEEEEDPLAEEKRLEEER, and WEEQQRKEREEEEQKRQEKREREE. Lys49 is covalently cross-linked (Glycyl lysine isopeptide (Lys-Gly) (interchain with G-Cter in SUMO2)). Over residues 57-66 the composition is skewed to basic and acidic residues; it reads AEEKRLEEER. A C3H1-type 1 zinc finger spans residues 170-198; the sequence is EKDRANCPFYSKTGACRFGDRCSRKHNFP. Positions 202-308 constitute an RRM domain; the sequence is PTLLIKGMFT…RQLQCEFCPV (107 aa). The segment at 310–337 adopts a C3H1-type 2 zinc-finger fold; sequence RWKMAICGLFEVQQCPRGKHCNFLHVFR. Position 353 is a phosphoserine (Ser353). The tract at residues 354-462 is disordered; that stretch reads PDWTSSSFGK…QPQPQPQSDP (109 aa). A compositionally biased stretch (basic and acidic residues) spans 364–379; sequence NSERRERASHYDEYYG. Ser389 carries the phosphoserine modification. A compositionally biased stretch (basic and acidic residues) spans 392–403; the sequence is FYKRNGESDRKS. Residues 404–417 are compositionally biased toward basic residues; it reads SSRHRVKKSHRYGM.

In terms of assembly, component of the U11/U12 snRNPs that are part of the U12-type spliceosome. Interacts (via RS domain) with SRSF1 and SRSF2. Interacts with U2AF2/U2AF65. Phosphorylated in the RS domain by SRPK1.

It localises to the nucleus. Pre-mRNA-binding protein required for splicing of both U2- and U12-type introns. Selectively interacts with the 3'-splice site of U2- and U12-type pre-mRNAs and promotes different steps in U2 and U12 intron splicing. Recruited to U12 pre-mRNAs in an ATP-dependent manner and is required for assembly of the prespliceosome, a precursor to other spliceosomal complexes. For U2-type introns, it is selectively and specifically required for the second step of splicing. The chain is U2 small nuclear ribonucleoprotein auxiliary factor 35 kDa subunit-related protein 2 (Zrsr2) from Mus musculus (Mouse).